A 251-amino-acid polypeptide reads, in one-letter code: uncharacterized protein (251 aa).

Disordered regions lie at residues Met1–Gly93, Gly107–Gln152, Pro169–Ser188, and Leu224–Ser251. Positions Gln225 to Pro234 are enriched in polar residues.

This is an uncharacterized protein from Homo sapiens (Human).